A 150-amino-acid polypeptide reads, in one-letter code: UPF0756 membrane protein PM0771 (150 aa).

Helical transmembrane passes span L12–L34, H52–G72, L79–W99, and I123–L143.

It belongs to the UPF0756 family.

Its subcellular location is the cell membrane. The polypeptide is UPF0756 membrane protein PM0771 (Pasteurella multocida (strain Pm70)).